A 301-amino-acid chain; its full sequence is Acetylglutamate kinase (301 aa).

Substrate-binding positions include glycine 68 to glycine 69, arginine 90, and asparagine 195.

Belongs to the acetylglutamate kinase family. ArgB subfamily.

The protein localises to the cytoplasm. It carries out the reaction N-acetyl-L-glutamate + ATP = N-acetyl-L-glutamyl 5-phosphate + ADP. Its pathway is amino-acid biosynthesis; L-arginine biosynthesis; N(2)-acetyl-L-ornithine from L-glutamate: step 2/4. Functionally, catalyzes the ATP-dependent phosphorylation of N-acetyl-L-glutamate. The protein is Acetylglutamate kinase of Pseudomonas aeruginosa (strain LESB58).